We begin with the raw amino-acid sequence, 300 residues long: DDRGK domain-containing protein 1 (300 aa).

The Lumenal portion of the chain corresponds to 1–2; sequence MD. Residues 3 to 23 form a helical membrane-spanning segment; it reads VVLYIAAAAILLVLIVFSVKI. Over 24–300 the chain is Cytoplasmic; it reads RGRTQDADVE…NLTPDIHSSA (277 aa). The tract at residues 28–173 is disordered; that stretch reads QDADVEDHQN…RVKEEQERRE (146 aa). Positions 78 to 90 are enriched in acidic residues; that stretch reads NEDSPVEADEDEE. Residues 112 to 173 are compositionally biased toward basic and acidic residues; it reads KLEEKQARKA…RVKEEQERRE (62 aa). The UFM1-interacting motif (UFIM) motif lies at 183–197; sequence SFIIEDQGEAEELTE. The PCI domain occupies 217–261; sequence VLLEDLASQFGLRTQDAIARLQDLIADGSLTGVIDDRGKFIFITP.

The protein belongs to the DDRGK1 family. Component of the UFM1 ribosome E3 ligase (UREL) complex, composed of ufl1, ddrgk1 and cdk5rap3.

Its subcellular location is the endoplasmic reticulum membrane. In terms of biological role, component of the UFM1 ribosome E3 ligase (UREL) complex, a multiprotein complex that catalyzes ufmylation of endoplasmic reticulum-docked proteins. The UREL complex plays a key role in ribosome recycling by mediating mono-ufmylation of the RPL26/uL24 subunit of the 60S ribosome following ribosome dissociation: ufmylation weakens the junction between post-termination 60S subunits and SEC61 translocons, promoting release and recycling of the large ribosomal subunit from the endoplasmic reticulum membrane. Ufmylation of RPL26/uL24 and subsequent 60S ribosome recycling either take place after normal termination of translation or after ribosome stalling during cotranslational translocation at the endoplasmic reticulum. Within the UREL complex, DDRGK1 tethers the complex to the endoplasmic reticulum membrane to restrict its activity to endoplasmic reticulum-docked ribosomes and acts as an ufmylation 'reader': following RPL26/uL24 ufmylation, DDRGK1 specifically binds to ufmylated RPL26/uL24 via its UFIM motif, resulting in stable association between the 60S ribosome and the UREL complex, followed by dissociation of the 60S ribosome subunit from the endoplasmic reticulum membrane. The UREL complex is also involved in reticulophagy in response to endoplasmic reticulum stress by promoting ufmylation of proteins such as CYB5R3 and RPN1, thereby promoting lysosomal degradation of ufmylated proteins. Plays a role in cartilage development through sox9, inhibiting the ubiquitin-mediated proteasomal degradation of this transcriptional regulator. Required for stabilization and ufmylation of ATG9A. In Danio rerio (Zebrafish), this protein is DDRGK domain-containing protein 1.